We begin with the raw amino-acid sequence, 123 residues long: Fluoride-specific ion channel FluC (123 aa).

Helical transmembrane passes span 7–27, 39–59, 68–88, and 101–121; these read LAVA…SGLL, MVNG…FWGF, FLGT…YETF, and LNVA…FLLA. Na(+)-binding residues include glycine 75 and serine 78.

Belongs to the fluoride channel Fluc/FEX (TC 1.A.43) family.

The protein resides in the cell membrane. The catalysed reaction is fluoride(in) = fluoride(out). Its activity is regulated as follows. Na(+) is not transported, but it plays an essential structural role and its presence is essential for fluoride channel function. Fluoride-specific ion channel. Important for reducing fluoride concentration in the cell, thus reducing its toxicity. The chain is Fluoride-specific ion channel FluC from Thermococcus gammatolerans (strain DSM 15229 / JCM 11827 / EJ3).